The chain runs to 440 residues: Light-independent protochlorophyllide reductase subunit N (440 aa).

3 residues coordinate [4Fe-4S] cluster: C15, C40, and C99.

It belongs to the BchN/ChlN family. Protochlorophyllide reductase is composed of three subunits; BchL, BchN and BchB. Forms a heterotetramer of two BchB and two BchN subunits. [4Fe-4S] cluster serves as cofactor.

It carries out the reaction chlorophyllide a + oxidized 2[4Fe-4S]-[ferredoxin] + 2 ADP + 2 phosphate = protochlorophyllide a + reduced 2[4Fe-4S]-[ferredoxin] + 2 ATP + 2 H2O. It participates in porphyrin-containing compound metabolism; bacteriochlorophyll biosynthesis (light-independent). Component of the dark-operative protochlorophyllide reductase (DPOR) that uses Mg-ATP and reduced ferredoxin to reduce ring D of protochlorophyllide (Pchlide) to form chlorophyllide a (Chlide). This reaction is light-independent. The NB-protein (BchN-BchB) is the catalytic component of the complex. This chain is Light-independent protochlorophyllide reductase subunit N, found in Heliobacterium mobile (Heliobacillus mobilis).